The following is a 156-amino-acid chain: Interleukin-36 receptor antagonist protein (156 aa).

Cysteines 9 and 155 form a disulfide.

Belongs to the IL-1 family. As to quaternary structure, interacts with cargo receptor TMED10; the interaction mediates the translocation from the cytoplasm into the ERGIC (endoplasmic reticulum-Golgi intermediate compartment) and thereby secretion. Removal of N-terminal methionine is necessary for full antagonistic activity. As to expression, highly abundant in embryonic tissue and tissues containing epithelial cells.

It localises to the cytoplasm. The protein localises to the secreted. Inhibits the activity of interleukin-36 (IL36A,IL36B and IL36G) by binding to receptor IL1RL2/IL-36R and preventing its association with the coreceptor IL1RAP for signaling. Part of the IL-36 signaling system that is thought to be present in epithelial barriers and to take part in local inflammatory response; similar to the IL-1 system with which it shares the coreceptor. Proposed to play a role in skin inflammation. May be involved in the innate immune response to fungal pathogens. May activate an anti-inflammatory signaling pathway by recruiting SIGIRR. This Mus musculus (Mouse) protein is Interleukin-36 receptor antagonist protein.